We begin with the raw amino-acid sequence, 105 residues long: Small ribosomal subunit protein uS10 (105 aa).

It belongs to the universal ribosomal protein uS10 family. As to quaternary structure, part of the 30S ribosomal subunit.

In terms of biological role, involved in the binding of tRNA to the ribosomes. The polypeptide is Small ribosomal subunit protein uS10 (Francisella tularensis subsp. mediasiatica (strain FSC147)).